The sequence spans 95 residues: Ribonuclease kappa-B (95 aa).

The next 2 helical transmembrane spans lie at 12–32 (GLII…FFYI) and 68–88 (CWIA…QFYV).

The protein belongs to the RNase K family.

The protein localises to the membrane. Inhibited by Zn(2+) and Hg(2+), while it is unaffected by Ca(2+). In terms of biological role, endoribonuclease which displays activity against poly(C) and poly(U) synthetic substrates, as well as rRNA. The chain is Ribonuclease kappa-B from Ceratitis capitata (Mediterranean fruit fly).